Consider the following 106-residue polypeptide: Large ribosomal subunit protein eL42 (106 aa).

It belongs to the eukaryotic ribosomal protein eL42 family.

In Cyberlindnera jadinii (Torula yeast), this protein is Large ribosomal subunit protein eL42 (RPL44).